The primary structure comprises 168 residues: MLTVSLLVCAMMALTQADHDGVLKGTATEAGEVSPVFRSRRALVCPAGWTLHGQRCFYSEATAMTWDLAEANCVNKGGHLASIHSLEEQLYIKDIVAGIVWIGGSACKVAGAWSWTDGTPVDYRTWCPTKPNDILSDCCMQMTAAVDKCWDDLPCPASHASICAKAAI.

The signal sequence occupies residues 1 to 17 (MLTVSLLVCAMMALTQA). A propeptide spanning residues 18-34 (DHDGVLKGTATEAGEVS) is cleaved from the precursor. Cystine bridges form between Cys45/Cys56, Cys73/Cys163, Cys107/Cys138, Cys127/Cys149, and Cys139/Cys155. The C-type lectin domain maps to 52–164 (HGQRCFYSEA…CPASHASICA (113 aa)).

The protein resides in the secreted. Functionally, has antifreeze activity to protect fish blood from freezing at subzero sea water temperatures. Binds to ice crystals and inhibits their growth. The thermal hysteresis (TH) activity, the ability to lower the blood freezing point, is approximately 0.45 degrees Celsius at 0.15 mM for this protein. The polypeptide is Type-2 ice-structuring protein (Brachyopsis segaliensis (Sea poacher)).